Here is a 383-residue protein sequence, read N- to C-terminus: F-box/kelch-repeat protein At4g19330 (383 aa).

The interval 1-27 is disordered; it reads MAYLSFKSNMERTPRESNTPCPPPQPS. Residues 28–79 enclose the F-box domain; the sequence is PSLFSSLPDDIVLNILARISTSYYQTLSLVSKTFRLLILSKELDMERSYLGT. Kelch repeat units follow at residues 147–192, 193–239, and 272–318; these read ETYE…VLDG, KLYV…NIQT, and STCE…SEIG.

Its function is as follows. Involved in seed germination. This Arabidopsis thaliana (Mouse-ear cress) protein is F-box/kelch-repeat protein At4g19330.